Reading from the N-terminus, the 157-residue chain is 2-C-methyl-D-erythritol 2,4-cyclodiphosphate synthase (157 aa).

The a divalent metal cation site is built by Asp9 and His11. 4-CDP-2-C-methyl-D-erythritol 2-phosphate-binding positions include 9 to 11 (DVH) and 35 to 36 (HS). Residue His43 participates in a divalent metal cation binding. 4-CDP-2-C-methyl-D-erythritol 2-phosphate-binding positions include 57–59 (DIG), 62–66 (FPDTD), 101–107 (AEKPKMA), 133–136 (TTTE), Phe140, and Arg143.

It belongs to the IspF family. Homotrimer. A divalent metal cation serves as cofactor.

The catalysed reaction is 4-CDP-2-C-methyl-D-erythritol 2-phosphate = 2-C-methyl-D-erythritol 2,4-cyclic diphosphate + CMP. The protein operates within isoprenoid biosynthesis; isopentenyl diphosphate biosynthesis via DXP pathway; isopentenyl diphosphate from 1-deoxy-D-xylulose 5-phosphate: step 4/6. Involved in the biosynthesis of isopentenyl diphosphate (IPP) and dimethylallyl diphosphate (DMAPP), two major building blocks of isoprenoid compounds. Catalyzes the conversion of 4-diphosphocytidyl-2-C-methyl-D-erythritol 2-phosphate (CDP-ME2P) to 2-C-methyl-D-erythritol 2,4-cyclodiphosphate (ME-CPP) with a corresponding release of cytidine 5-monophosphate (CMP). This chain is 2-C-methyl-D-erythritol 2,4-cyclodiphosphate synthase, found in Listeria monocytogenes serotype 4a (strain HCC23).